A 251-amino-acid polypeptide reads, in one-letter code: NADPH-dependent oxidoreductase (251 aa).

The protein belongs to the flavin oxidoreductase frp family. FMN serves as cofactor.

In terms of biological role, reduces FMN, organic nitro compounds and disulfide DTNB. Involved in maintenance of the cellular redox state and the disulfide stress response. The sequence is that of NADPH-dependent oxidoreductase (nfrA) from Staphylococcus epidermidis (strain ATCC 12228 / FDA PCI 1200).